We begin with the raw amino-acid sequence, 151 residues long: Nascent polypeptide-associated complex subunit beta (151 aa).

One can recognise an NAC-A/B domain in the interval 32 to 97 (EQDDTKLMEA…PQEKDVTQLI (66 aa)). Positions 122–151 (GKTPSMGGENAGADEDIPDLIEGQKFDEVE) are disordered.

Belongs to the NAC-beta family. Part of the nascent polypeptide-associated complex (NAC), consisting of EGD2 and EGD1. NAC associates with ribosomes via EGD1.

The protein resides in the cytoplasm. It is found in the nucleus. Its function is as follows. Component of the nascent polypeptide-associated complex (NAC), a dynamic component of the ribosomal exit tunnel, protecting the emerging polypeptides from interaction with other cytoplasmic proteins to ensure appropriate nascent protein targeting. The NAC complex also promotes mitochondrial protein import by enhancing productive ribosome interactions with the outer mitochondrial membrane and blocks the inappropriate interaction of ribosomes translating non-secretory nascent polypeptides with translocation sites in the membrane of the endoplasmic reticulum. EGD1 may act as a transcription factor that exert a negative effect on the expression of several genes that are transcribed by RNA polymerase II. This Meyerozyma guilliermondii (strain ATCC 6260 / CBS 566 / DSM 6381 / JCM 1539 / NBRC 10279 / NRRL Y-324) (Yeast) protein is Nascent polypeptide-associated complex subunit beta (EGD1).